Here is a 149-residue protein sequence, read N- to C-terminus: Ribonuclease H (149 aa).

The RNase H type-1 domain occupies 5–146; it reads QRPHVVIFTD…ADELAREGLA (142 aa). Positions 14, 52, 74, and 138 each coordinate Mg(2+).

This sequence belongs to the RNase H family. In terms of assembly, monomer. Requires Mg(2+) as cofactor.

It localises to the cytoplasm. The enzyme catalyses Endonucleolytic cleavage to 5'-phosphomonoester.. In terms of biological role, endonuclease that specifically degrades the RNA of RNA-DNA hybrids. This is Ribonuclease H from Afipia carboxidovorans (strain ATCC 49405 / DSM 1227 / KCTC 32145 / OM5) (Oligotropha carboxidovorans).